The chain runs to 402 residues: uncharacterized protein (402 aa).

12 helical membrane-spanning segments follow: residues 11-31 (LALA…IDMY), 48-68 (LVQL…LIVG), 80-100 (LLIC…SPNI), 108-125 (FLQG…RAIV), 140-160 (LLMV…GAIL), 167-187 (WHTI…LIAL), 219-239 (FMGY…YVSG), 254-274 (VFSI…FIIG), 286-306 (LRIA…MTMI), 308-328 (GPLA…GMVL), 347-367 (SALL…LVGI), and 373-393 (VPMG…FFGL).

Belongs to the major facilitator superfamily. Bcr/CmlA family.

The protein localises to the cell membrane. This is an uncharacterized protein from Bacillus subtilis (strain 168).